The following is a 162-amino-acid chain: Phosphopantetheine adenylyltransferase (162 aa).

Residue Ser11 participates in substrate binding. ATP is bound by residues 11-12 (SF) and His19. Substrate-binding residues include Lys43, Val76, and Arg90. ATP contacts are provided by residues 91 to 93 (GLR), Glu101, and 126 to 132 (HLYISSS).

This sequence belongs to the bacterial CoaD family. In terms of assembly, homohexamer. It depends on Mg(2+) as a cofactor.

The protein resides in the cytoplasm. It catalyses the reaction (R)-4'-phosphopantetheine + ATP + H(+) = 3'-dephospho-CoA + diphosphate. Its pathway is cofactor biosynthesis; coenzyme A biosynthesis; CoA from (R)-pantothenate: step 4/5. Is inhibited by a series of cycloalkyl pyrimidines, which also show suppression of bacterial growth. In terms of biological role, reversibly transfers an adenylyl group from ATP to 4'-phosphopantetheine, yielding dephospho-CoA (dPCoA) and pyrophosphate. This is Phosphopantetheine adenylyltransferase from Streptococcus pneumoniae (strain ATCC BAA-255 / R6).